Here is a 503-residue protein sequence, read N- to C-terminus: Cytochrome P450 71B6 (503 aa).

The chain crosses the membrane as a helical span at residues 10-30 (TELLPWLLLLLIPPLLIFFLL). Cysteine 446 provides a ligand contact to heme.

It belongs to the cytochrome P450 family. The cofactor is heme.

It is found in the membrane. This Arabidopsis thaliana (Mouse-ear cress) protein is Cytochrome P450 71B6 (CYP71B6).